The following is a 410-amino-acid chain: 3-phosphoshikimate 1-carboxyvinyltransferase (410 aa).

Residues Lys-20, Ser-21, and Arg-25 each coordinate 3-phosphoshikimate. Residue Lys-20 participates in phosphoenolpyruvate binding. Residue Arg-115 coordinates phosphoenolpyruvate. Residues Ser-157, Ser-158, Gln-159, Ser-183, Asp-293, and Lys-320 each coordinate 3-phosphoshikimate. Gln-159 serves as a coordination point for phosphoenolpyruvate. Asp-293 functions as the Proton acceptor in the catalytic mechanism. Phosphoenolpyruvate-binding residues include Arg-324, Arg-365, and Lys-391.

The protein belongs to the EPSP synthase family. As to quaternary structure, monomer.

It is found in the cytoplasm. It catalyses the reaction 3-phosphoshikimate + phosphoenolpyruvate = 5-O-(1-carboxyvinyl)-3-phosphoshikimate + phosphate. It functions in the pathway metabolic intermediate biosynthesis; chorismate biosynthesis. Catalyzes the transfer of the enolpyruvyl moiety of phosphoenolpyruvate (PEP) to the 5-hydroxyl of shikimate-3-phosphate (S3P) to produce enolpyruvyl shikimate-3-phosphate and inorganic phosphate. This Thermoplasma acidophilum (strain ATCC 25905 / DSM 1728 / JCM 9062 / NBRC 15155 / AMRC-C165) protein is 3-phosphoshikimate 1-carboxyvinyltransferase.